A 162-amino-acid chain; its full sequence is MKITLRMMVLAVLTAMAMVLAACGGGGSSGGSTGGGSGSGPVTIEIGSKGEELAFDKTELTVSAGQTVTIRFKNNSAVQQHNWILVKGGEAEAANIANAGLSAGPAANYLPADKSNIIAESPLANGNETVEVTFTAPAAGTYLYICTVPGHYPLMQGKLVVN.

The signal sequence occupies residues 1–22 (MKITLRMMVLAVLTAMAMVLAA). Residue Cys-23 is the site of N-palmitoyl cysteine attachment. Cys-23 carries S-diacylglycerol cysteine lipidation. A Plastocyanin-like domain is found at 42–162 (VTIEIGSKGE…PLMQGKLVVN (121 aa)). Cu cation contacts are provided by His-81, Cys-146, His-151, and Met-155.

In terms of assembly, monomer. The cofactor is Cu cation.

The protein resides in the cell membrane. Functionally, probably a soluble electron acceptor for the integral membrane protein electron transfer alternative complex III (ACIII). The protein is Auracyanin-A of Chloroflexus aurantiacus (strain ATCC 29366 / DSM 635 / J-10-fl).